We begin with the raw amino-acid sequence, 252 residues long: 5-oxoprolinase subunit A (252 aa).

Belongs to the LamB/PxpA family. In terms of assembly, forms a complex composed of PxpA, PxpB and PxpC.

The enzyme catalyses 5-oxo-L-proline + ATP + 2 H2O = L-glutamate + ADP + phosphate + H(+). Its function is as follows. Catalyzes the cleavage of 5-oxoproline to form L-glutamate coupled to the hydrolysis of ATP to ADP and inorganic phosphate. This chain is 5-oxoprolinase subunit A, found in Staphylococcus carnosus (strain TM300).